Consider the following 152-residue polypeptide: Ninjurin-1 (152 aa).

Methionine 1 is modified (N-acetylmethionine). The tract at residues 1–26 (MDSGTEEYELNGGLPPGTPGSPDASP) is disordered. Residues 1–78 (MDSGTEEYEL…EQGPSFAFYV (78 aa)) lie on the Extracellular side of the membrane. 2 positions are modified to phosphoserine: serine 21 and serine 25. Positions 26–37 (PARWGWRHGPIN) are N-terminal adhesion motif. The required to induce plasma membrane rupture stretch occupies residues 40 to 69 (HYASKKSAAESMLDIALLMANASQLKAVVE). The tract at residues 44–55 (KKSAAESMLDIA) is helix alpha1. The tract at residues 58–74 (MANASQLKAVVEQGPSF) is helix alpha2. A glycan (N-linked (GlcNAc...) asparagine) is linked at asparagine 60. Residues 79-103 (PLVVLISISLVLQIGVGVLLIFLVK) form a helical membrane-spanning segment. Topologically, residues 104–113 (YDLNNPAKHA) are cytoplasmic. A helical membrane pass occupies residues 114–138 (KLDFLNNLATGLVFIIVVVNIFITA). Over 139–152 (FGVQKPLMDMAPQQ) the chain is Extracellular.

Belongs to the ninjurin family. In terms of assembly, homodimer; in absence of death stimuli, forms an inactive homodimer. Homooligomer; in response to death stimuli, homooligomerizes into long, highly branched filaments and large, ring-shaped structures in the membrane. In terms of processing, cleaved by MMP9 protease to generate the Secreted ninjurin-1 form. Post-translationally, N-linked glycosylation is required for homooligomerization. As to expression, widely expressed in both adult and embryonic tissues, primarily those of epithelial origin.

Its subcellular location is the cell membrane. The protein localises to the synaptic cell membrane. It is found in the secreted. Its activity is regulated as follows. In response to death stimuli, homooligomerizes and disrupts membrane integrity by introducing the hydrophilic faces of alpha1 and alpha2 helices into the hydrophobic membrane. Homooligomerization and ability to mediate plasma membrane rupture is inhibited by glycine; it is unclear whether glycine directly or indirectly inhibits homooligomerization. In normal conditions, NINJ1 is autoinhibited via formation of a homodimer: in the inactive homodimer, the alpha1 and alpha2 helices (residues 44-74) form a single transmembrane region without a kink, in which hydrophilic faces of alpha1 and alpha2 helices are sequestered. Effector of various programmed cell death, such as pyroptosis and necroptosis, which mediates plasma membrane rupture (cytolysis). Oligomerizes in response to death stimuli and forms ring-like structures on the plasma membrane: acts by cutting and shedding membrane disks, like a cookie cutter, leading to membrane damage and loss that cannot be repaired by the cell. Plasma membrane rupture leads to release intracellular molecules named damage-associated molecular patterns (DAMPs) that propagate the inflammatory response. Mechanistically, mediates plasma membrane rupture by introducing hydrophilic faces of 2 alpha helices into the hydrophobic membrane. Induces plasma membrane rupture downstream of Gasdermin (GSDMA, GSDMB, GSDMC, GSDMD, or GSDME) or MLKL during pyroptosis or necroptosis, respectively. Acts as an effector of PANoptosis downstream of CASP1, CASP4, CASP8 and RIPK3. Also induces plasma membrane rupture in response to cell swelling caused by osmotic stress and ferroptosis downstream of lipid peroxidation. Acts as a regulator of Toll-like receptor 4 (TLR4) signaling triggered by lipopolysaccharide (LPS) during systemic inflammation; directly binds LPS. Involved in leukocyte migration during inflammation by promoting transendothelial migration of macrophages via homotypic binding. Promotes the migration of monocytes across the brain endothelium to central nervous system inflammatory lesions. Also acts as a homophilic transmembrane adhesion molecule involved in various processes such as axonal growth, cell chemotaxis and angiogenesis. Promotes cell adhesion by mediating homophilic interactions via its extracellular N-terminal adhesion motif (N-NAM). Involved in the progression of the inflammatory stress by promoting cell-to-cell interactions between immune cells and endothelial cells. Plays a role in nerve regeneration by promoting maturation of Schwann cells. Acts as a regulator of angiogenesis. Promotes the formation of new vessels by mediating the interaction between capillary pericyte cells and endothelial cells. Promotes osteoclasts development by enhancing the survival of prefusion osteoclasts. Also involved in striated muscle growth and differentiation. Functionally, secreted form generated by cleavage, which has chemotactic activity. Acts as an anti-inflammatory mediator by promoting monocyte recruitment, thereby ameliorating atherosclerosis. This chain is Ninjurin-1, found in Homo sapiens (Human).